Reading from the N-terminus, the 325-residue chain is Protein ORANGE-GREEN, chloroplastic (325 aa).

The N-terminal 54 residues, 1–54 (MDRVLVASYPINHLIRPHSFRIDYCWSTCFTSRLNSGKERQKLSSRWRWRSMAS), are a transit peptide targeting the chloroplast. Over residues 53 to 71 (ASDSTDSSSSSSFAPSVES) the composition is skewed to low complexity. The interval 53–77 (ASDSTDSSSSSSFAPSVESDPSDKT) is disordered. 2 helical membrane-spanning segments follow: residues 164-184 (LYYV…GLLA) and 217-237 (IVAS…VVEV). Positions 226 to 317 (VGVISALMVV…CTGMAMASEH (92 aa)) are CR-type-like. A CXXCXGXG motif repeat occupies 248–255 (CKYCLGTG). One copy of the CXXCXXXG motif repeat lies at 259-266 (CARCSNTG). The CXXCXGXG motif repeat unit spans residues 292–299 (CQNCSGSG). One copy of the CXXCXXXG motif repeat lies at 303–310 (CPTCLCTG).

It belongs to the orange-like family.

The protein localises to the plastid. The protein resides in the chloroplast membrane. Functionally, involved in chloroplast differentiation in fruit flesh. The protein is Protein ORANGE-GREEN, chloroplastic of Cucumis melo (Muskmelon).